Reading from the N-terminus, the 137-residue chain is Small heat shock protein IbpA (137 aa).

Residues 28 to 137 enclose the sHSP domain; that stretch reads SQSNGGYPPY…ANKPRRIEIN (110 aa).

Belongs to the small heat shock protein (HSP20) family. In terms of assembly, monomer. Forms homomultimers of about 100-150 subunits at optimal growth temperatures. Conformation changes to monomers at high temperatures or high ionic concentrations.

It is found in the cytoplasm. Its function is as follows. Associates with aggregated proteins, together with IbpB, to stabilize and protect them from irreversible denaturation and extensive proteolysis during heat shock and oxidative stress. Aggregated proteins bound to the IbpAB complex are more efficiently refolded and reactivated by the ATP-dependent chaperone systems ClpB and DnaK/DnaJ/GrpE. Its activity is ATP-independent. The chain is Small heat shock protein IbpA from Salmonella choleraesuis (strain SC-B67).